Here is a 333-residue protein sequence, read N- to C-terminus: Type II restriction enzyme XcyI (333 aa).

Belongs to the XcyI type II restriction endonuclease family. In terms of assembly, monomer. Mg(2+) is required as a cofactor.

It catalyses the reaction Endonucleolytic cleavage of DNA to give specific double-stranded fragments with terminal 5'-phosphates.. In terms of biological role, a P subtype restriction enzyme that recognizes the double-stranded sequence 5'-CCCGGG-3' and cleaves after C-1. This chain is Type II restriction enzyme XcyI (xcyIR), found in Xanthomonas campestris pv. cyanopsidis.